Reading from the N-terminus, the 462-residue chain is Elongation factor 1-alpha 1 (462 aa).

N,N,N-trimethylglycine is present on G2. Residues 5–242 form the tr-type G domain; the sequence is KTHINIVVIG…DCILPPTRPT (238 aa). A G1 region spans residues 14-21; that stretch reads GHVDSGKS. Position 14–21 (14–21) interacts with GTP; the sequence is GHVDSGKS. The segment at 70 to 74 is G2; that stretch reads GITID. The tract at residues 91–94 is G3; that stretch reads DAPG. GTP-binding positions include 153-156 and 194-196; these read NKMD and SGW. Residues 153 to 156 form a G4 region; it reads NKMD. The interval 194–196 is G5; sequence SGW. 5-glutamyl glycerylphosphorylethanolamine occurs at positions 301 and 374.

It belongs to the TRAFAC class translation factor GTPase superfamily. Classic translation factor GTPase family. EF-Tu/EF-1A subfamily.

It localises to the cytoplasm. The catalysed reaction is GTP + H2O = GDP + phosphate + H(+). Translation elongation factor that catalyzes the GTP-dependent binding of aminoacyl-tRNA (aa-tRNA) to the A-site of ribosomes during the elongation phase of protein synthesis. Base pairing between the mRNA codon and the aa-tRNA anticodon promotes GTP hydrolysis, releasing the aa-tRNA from EEF1A1 and allowing its accommodation into the ribosome. The growing protein chain is subsequently transferred from the P-site peptidyl tRNA to the A-site aa-tRNA, extending it by one amino acid through ribosome-catalyzed peptide bond formation. The polypeptide is Elongation factor 1-alpha 1 (EEF1A) (Gallus gallus (Chicken)).